The primary structure comprises 418 residues: Putative O-antigen transporter (418 aa).

Transmembrane regions (helical) follow at residues 8–28, 37–57, 85–105, 124–144, 165–185, 217–237, 251–271, 297–317, 334–354, 362–382, and 385–405; these read VWNL…LGFL, FGVY…DVGL, FLVL…DGIV, LLAI…ILEG, IPAI…GLIF, LFFF…MVYF, VAFY…PAAI, LLMF…SGLV, LNVL…FSAI, ITAL…YFMV, and YGLL…ALLL.

It belongs to the polysaccharide synthase family.

The protein resides in the cell inner membrane. The protein operates within bacterial outer membrane biogenesis; lipopolysaccharide biosynthesis. Functionally, could be an O-antigen transporter. The chain is Putative O-antigen transporter (rfbE) from Shigella flexneri.